A 477-amino-acid polypeptide reads, in one-letter code: Putative 4-(hydroxymethyl)benzenesulfonate dehydrogenase TsaD2 (477 aa).

Residues W154 to N155, K178 to E181, and G230 to S231 each bind NAD(+). Catalysis depends on E252, which acts as the Proton acceptor. L253 provides a ligand contact to NAD(+). The active-site Nucleophile is the C286. E381 serves as a coordination point for NAD(+).

This sequence belongs to the aldehyde dehydrogenase family. Homodimer.

The enzyme catalyses 4-(hydroxymethyl)benzenesulfonate + NAD(+) = 4-formylbenzenesulfonate + NADH + H(+). Involved in the toluene-4-sulfonate degradation pathway. Does not discriminate between the sulfonate and the carboxyl substituents and can also be involved in the p-toluenecarboxylate degradation pathway. This chain is Putative 4-(hydroxymethyl)benzenesulfonate dehydrogenase TsaD2 (tsaD2), found in Comamonas testosteroni (Pseudomonas testosteroni).